We begin with the raw amino-acid sequence, 79 residues long: ATP synthase subunit beta (79 aa).

The protein belongs to the ATPase alpha/beta chains family. As to quaternary structure, F-type ATPases have 2 components, CF(1) - the catalytic core - and CF(0) - the membrane proton channel. CF(1) has five subunits: alpha(3), beta(3), gamma(1), delta(1), epsilon(1). CF(0) has three main subunits: a(1), b(2) and c(9-12). The alpha and beta chains form an alternating ring which encloses part of the gamma chain. CF(1) is attached to CF(0) by a central stalk formed by the gamma and epsilon chains, while a peripheral stalk is formed by the delta and b chains.

It localises to the cell membrane. It catalyses the reaction ATP + H2O + 4 H(+)(in) = ADP + phosphate + 5 H(+)(out). In terms of biological role, produces ATP from ADP in the presence of a proton gradient across the membrane. The catalytic sites are hosted primarily by the beta subunits. This chain is ATP synthase subunit beta (atpD), found in Streptococcus downei (Streptococcus sobrinus).